A 625-amino-acid chain; its full sequence is Chaperone protein HtpG (625 aa).

The tract at residues 1–337 is a; substrate-binding; the sequence is MNIQKKEVYS…SNNLPLNVSR (337 aa). A b region spans residues 338–552; the sequence is EILQDNSITQ…SNEMSTQMAK (215 aa). Residues 553–625 form a c region; it reads LFSAAGQSVP…ARTNKLILEQ (73 aa).

Belongs to the heat shock protein 90 family. In terms of assembly, homodimer.

The protein localises to the cytoplasm. Its function is as follows. Molecular chaperone. Has ATPase activity. The chain is Chaperone protein HtpG from Buchnera aphidicola subsp. Schizaphis graminum (strain Sg).